The sequence spans 154 residues: Nucleoside diphosphate kinase (154 aa).

ATP is bound by residues lysine 12, phenylalanine 60, arginine 88, threonine 94, arginine 105, and asparagine 115. The active-site Pros-phosphohistidine intermediate is histidine 118.

The protein belongs to the NDK family. The cofactor is Mg(2+).

Its subcellular location is the cytoplasm. It carries out the reaction a 2'-deoxyribonucleoside 5'-diphosphate + ATP = a 2'-deoxyribonucleoside 5'-triphosphate + ADP. The catalysed reaction is a ribonucleoside 5'-diphosphate + ATP = a ribonucleoside 5'-triphosphate + ADP. Its function is as follows. Major role in the synthesis of nucleoside triphosphates other than ATP. The ATP gamma phosphate is transferred to the NDP beta phosphate via a ping-pong mechanism, using a phosphorylated active-site intermediate. This Haloarcula marismortui (strain ATCC 43049 / DSM 3752 / JCM 8966 / VKM B-1809) (Halobacterium marismortui) protein is Nucleoside diphosphate kinase.